The primary structure comprises 444 residues: Methylenetetrahydrofolate--tRNA-(uracil-5-)-methyltransferase TrmFO (444 aa).

10 to 15 (GAGLAG) contributes to the FAD binding site.

It belongs to the MnmG family. TrmFO subfamily. FAD serves as cofactor.

The protein resides in the cytoplasm. The catalysed reaction is uridine(54) in tRNA + (6R)-5,10-methylene-5,6,7,8-tetrahydrofolate + NADH + H(+) = 5-methyluridine(54) in tRNA + (6S)-5,6,7,8-tetrahydrofolate + NAD(+). It carries out the reaction uridine(54) in tRNA + (6R)-5,10-methylene-5,6,7,8-tetrahydrofolate + NADPH + H(+) = 5-methyluridine(54) in tRNA + (6S)-5,6,7,8-tetrahydrofolate + NADP(+). Functionally, catalyzes the folate-dependent formation of 5-methyl-uridine at position 54 (M-5-U54) in all tRNAs. The sequence is that of Methylenetetrahydrofolate--tRNA-(uracil-5-)-methyltransferase TrmFO from Streptococcus pneumoniae serotype 4 (strain ATCC BAA-334 / TIGR4).